Here is a 408-residue protein sequence, read N- to C-terminus: Argininosuccinate synthase (408 aa).

8-16 (AYSGGLDTS) is an ATP binding site. Tyrosine 86 contacts L-citrulline. Glycine 116 serves as a coordination point for ATP. Residues threonine 118, asparagine 122, and aspartate 123 each contribute to the L-aspartate site. An L-citrulline-binding site is contributed by asparagine 122. L-citrulline is bound by residues arginine 126, serine 174, glutamate 259, and tyrosine 271.

It belongs to the argininosuccinate synthase family. Type 1 subfamily. Homotetramer.

It is found in the cytoplasm. It catalyses the reaction L-citrulline + L-aspartate + ATP = 2-(N(omega)-L-arginino)succinate + AMP + diphosphate + H(+). It participates in amino-acid biosynthesis; L-arginine biosynthesis; L-arginine from L-ornithine and carbamoyl phosphate: step 2/3. This Leuconostoc mesenteroides subsp. mesenteroides (strain ATCC 8293 / DSM 20343 / BCRC 11652 / CCM 1803 / JCM 6124 / NCDO 523 / NBRC 100496 / NCIMB 8023 / NCTC 12954 / NRRL B-1118 / 37Y) protein is Argininosuccinate synthase.